Reading from the N-terminus, the 230-residue chain is Flagellar L-ring protein (230 aa).

The N-terminal stretch at 1–26 (MKQVRLLPSATVRAACAVAVAAFAAG) is a signal peptide. Cysteine 27 carries N-palmitoyl cysteine lipidation. Residue cysteine 27 is the site of S-diacylglycerol cysteine attachment.

This sequence belongs to the FlgH family. In terms of assembly, the basal body constitutes a major portion of the flagellar organelle and consists of four rings (L,P,S, and M) mounted on a central rod.

It localises to the cell outer membrane. The protein resides in the bacterial flagellum basal body. Functionally, assembles around the rod to form the L-ring and probably protects the motor/basal body from shearing forces during rotation. The protein is Flagellar L-ring protein of Burkholderia lata (strain ATCC 17760 / DSM 23089 / LMG 22485 / NCIMB 9086 / R18194 / 383).